Consider the following 690-residue polypeptide: NF-kappa-B-repressing factor (690 aa).

Positions 1 to 296 are active repression domain; that stretch reads MEKILQMAEG…FKHTFGEDLV (296 aa). The Nuclear localization signal motif lies at 25 to 45; it reads KPSKGQKRHLSTCDGQNPPKK. Disordered regions lie at residues 27-87 and 132-163; these read SKGQ…NEQT and MYFD…QTFP. K68 participates in a covalent cross-link: Glycyl lysine isopeptide (Lys-Gly) (interchain with G-Cter in SUMO2). A compositionally biased stretch (low complexity) spans 142–163; it reads STTSQQANSQSTPEPSPSQTFP. A DNA-binding region spans residues 296 to 388; sequence VVCQIGMSSY…RVFLQDHCLA (93 aa). The span at 414 to 431 shows a compositional bias: polar residues; that stretch reads PTYPSVKSSQCHTGSSPR. Residues 414–437 are disordered; the sequence is PTYPSVKSSQCHTGSSPRGSGKKK. A Glycyl lysine isopeptide (Lys-Gly) (interchain with G-Cter in SUMO2) cross-link involves residue K500. The G-patch domain maps to 551–596; sequence EDNIGNQLLRKMGWTGGGLGKSGEGIREPISVKEQHKREGLGLDVE. The R3H domain occupies 600–664; sequence KIAKRDIEQI…DRYLVVGRKR (65 aa). S618 carries the phosphoserine modification. Residues K666 and K674 each participate in a glycyl lysine isopeptide (Lys-Gly) (interchain with G-Cter in SUMO2) cross-link.

As to quaternary structure, interacts with NF-kappa-B. Interacts with XRN2. Interacts (via G-patch domain) with DHX15; promoting the RNA helicase activity of DHX15. As to expression, widely and constitutively expressed. Expressed at lower level in colon, peripheral blood lymphocytes, lung and kidney.

It is found in the nucleus. The protein resides in the nucleolus. Functionally, enhances the ATPase activity of DHX15 by acting like a brace that tethers mobile sections of DHX15 together, stabilizing a functional conformation with high RNA affinity of DHX15. Involved in the constitutive silencing of the interferon beta promoter, independently of the virus-induced signals, and in the inhibition of the basal and cytokine-induced iNOS promoter activity. Also involved in the regulation of IL-8 transcription. May also act as a DNA-binding transcription regulator: interacts with a specific negative regulatory element (NRE) 5'-AATTCCTCTGA-3' to mediate transcriptional repression of certain NK-kappa-B responsive genes. The sequence is that of NF-kappa-B-repressing factor from Homo sapiens (Human).